Here is a 154-residue protein sequence, read N- to C-terminus: Interleukin-2 (154 aa).

The first 20 residues, 1–20, serve as a signal peptide directing secretion; the sequence is MYRMQLLSCIALSLALVTNS. A glycan (O-linked (GalNAc...) threonine) is linked at threonine 23. Cysteine 78 and cysteine 126 are joined by a disulfide.

Belongs to the IL-2 family.

It is found in the secreted. Its function is as follows. Cytokine produced by activated CD4-positive helper T-cells and to a lesser extend activated CD8-positive T-cells and natural killer (NK) cells that plays pivotal roles in the immune response and tolerance. Binds to a receptor complex composed of either the high-affinity trimeric IL-2R (IL2RA/CD25, IL2RB/CD122 and IL2RG/CD132) or the low-affinity dimeric IL-2R (IL2RB and IL2RG). Interaction with the receptor leads to oligomerization and conformation changes in the IL-2R subunits resulting in downstream signaling starting with phosphorylation of JAK1 and JAK3. In turn, JAK1 and JAK3 phosphorylate the receptor to form a docking site leading to the phosphorylation of several substrates including STAT5. This process leads to activation of several pathways including STAT, phosphoinositide-3-kinase/PI3K and mitogen-activated protein kinase/MAPK pathways. Functions as a T-cell growth factor and can increase NK-cell cytolytic activity as well. Promotes strong proliferation of activated B-cells and subsequently immunoglobulin production. Plays a pivotal role in regulating the adaptive immune system by controlling the survival and proliferation of regulatory T-cells, which are required for the maintenance of immune tolerance. Moreover, participates in the differentiation and homeostasis of effector T-cell subsets, including Th1, Th2, Th17 as well as memory CD8-positive T-cells. The protein is Interleukin-2 (IL2) of Papio anubis (Olive baboon).